We begin with the raw amino-acid sequence, 322 residues long: Ferredoxin--NADP reductase (322 aa).

Residues aspartate 34, glutamine 42, tyrosine 47, valine 87, phenylalanine 120, aspartate 279, and threonine 320 each coordinate FAD.

The protein belongs to the ferredoxin--NADP reductase type 2 family. As to quaternary structure, homodimer. FAD is required as a cofactor.

The enzyme catalyses 2 reduced [2Fe-2S]-[ferredoxin] + NADP(+) + H(+) = 2 oxidized [2Fe-2S]-[ferredoxin] + NADPH. The protein is Ferredoxin--NADP reductase of Streptococcus sanguinis (strain SK36).